The primary structure comprises 253 residues: Lys-63-specific deubiquitinase BRCC36 (253 aa).

The region spanning 9–145 (VELQTDVYMV…KEHEIFLNCF (137 aa)) is the MPN domain. 3 residues coordinate Zn(2+): His-94, His-96, and Asp-107. The JAMM motif motif lies at 94–107 (HSHPHITVCPSHVD). Residues 227-249 (EKRIALNKLRATHLQRQLQELQK) are a coiled coil.

Belongs to the peptidase M67A family. BRCC36 subfamily. Component of the BRISC complex, at least composed of ABRAXAS2, BRCC3/BRCC36, BABAM2 and BABAM1/NBA1. Within the complex, interacts directly with ABRAXAS2. The heterodimer with ABRAXAS2 assembles into a heterotetramer. The BRISC complex binds polyubiquitin. Zn(2+) is required as a cofactor.

It localises to the cytoplasm. The protein localises to the nucleus. The protein resides in the cytoskeleton. Its subcellular location is the spindle pole. Metalloprotease that specifically cleaves 'Lys-63'-linked polyubiquitin chains, leaving the last ubiquitin chain attached to its substrates. Catalytic subunit of the BRISC complex; does not have activity by itself, but needs to be associated into a heterotetramer with ABRAXAS2 for minimal in vitro activity. Plays a role in regulating the onset of apoptosis via its role in modulating 'Lys-63'-linked ubiquitination of target proteins. Required for normal mitotic spindle assembly and microtubule attachment to kinetochores via its role in deubiquitinating spindle assembly factors. The polypeptide is Lys-63-specific deubiquitinase BRCC36 (Camponotus floridanus (Florida carpenter ant)).